Reading from the N-terminus, the 124-residue chain is Small ribosomal subunit protein uS12c (124 aa).

Disordered regions lie at residues 1-28 (MPTI…QSCP) and 104-124 (AAGV…KPKS). Composition is skewed to basic residues over residues 11–20 (ERRKIHKKTK) and 109–124 (DRRK…KPKS).

The protein belongs to the universal ribosomal protein uS12 family. In terms of assembly, part of the 30S ribosomal subunit.

The protein resides in the plastid. It is found in the chloroplast. With S4 and S5 plays an important role in translational accuracy. Located at the interface of the 30S and 50S subunits. The chain is Small ribosomal subunit protein uS12c (rps12) from Pyropia yezoensis (Susabi-nori).